Consider the following 173-residue polypeptide: dCTP deaminase, dUMP-forming (173 aa).

DCTP contacts are provided by residues 93–98 (RSSTGR), D111, 119–121 (TLE), Q138, and Y151. E121 (proton donor/acceptor) is an active-site residue.

Belongs to the dCTP deaminase family. In terms of assembly, homotrimer.

It carries out the reaction dCTP + 2 H2O = dUMP + NH4(+) + diphosphate. The protein operates within pyrimidine metabolism; dUMP biosynthesis; dUMP from dCTP: step 1/1. Functionally, bifunctional enzyme that catalyzes both the deamination of dCTP to dUTP and the hydrolysis of dUTP to dUMP without releasing the toxic dUTP intermediate. This Clostridium beijerinckii (strain ATCC 51743 / NCIMB 8052) (Clostridium acetobutylicum) protein is dCTP deaminase, dUMP-forming.